The following is a 276-amino-acid chain: NH(3)-dependent NAD(+) synthetase (276 aa).

Position 43 to 50 (43 to 50 (GISGGVDS)) interacts with ATP. Residue aspartate 49 coordinates Mg(2+). Arginine 146 contacts deamido-NAD(+). Threonine 166 lines the ATP pocket. Mg(2+) is bound at residue glutamate 171. Deamido-NAD(+) is bound by residues lysine 179 and aspartate 186. Positions 195 and 217 each coordinate ATP. 266–267 (HK) is a binding site for deamido-NAD(+).

It belongs to the NAD synthetase family. As to quaternary structure, homodimer.

The catalysed reaction is deamido-NAD(+) + NH4(+) + ATP = AMP + diphosphate + NAD(+) + H(+). The protein operates within cofactor biosynthesis; NAD(+) biosynthesis; NAD(+) from deamido-NAD(+) (ammonia route): step 1/1. Its function is as follows. Catalyzes the ATP-dependent amidation of deamido-NAD to form NAD. Uses ammonia as a nitrogen source. This Vibrio campbellii (strain ATCC BAA-1116) protein is NH(3)-dependent NAD(+) synthetase.